Reading from the N-terminus, the 207-residue chain is MAFTELKHPLIIDKLSRMRKKETSSKDFRENLNEIAQLMVYEIFRDLELEAIEIETPMTKTVGYTIDKPIVLVPILRAGIGMLDGIQKLIPTARIAHIGLYRDEETLEIHQYFAKKTESIDESYVIIVDPMLATGGSANKAIDIVKGWGVKNIKFVCLVAVEPGISNVLEKHPDVEIYAASKDEKLSDKGYIIPGLGDAGDRIFGTK.

Residues Arg77, Arg102, and 129–137 (DPMLATGGS) contribute to the 5-phospho-alpha-D-ribose 1-diphosphate site. Uracil-binding positions include Ile192 and 197 to 199 (GDA). Asp198 serves as a coordination point for 5-phospho-alpha-D-ribose 1-diphosphate.

It belongs to the UPRTase family. Mg(2+) is required as a cofactor.

It carries out the reaction UMP + diphosphate = 5-phospho-alpha-D-ribose 1-diphosphate + uracil. It functions in the pathway pyrimidine metabolism; UMP biosynthesis via salvage pathway; UMP from uracil: step 1/1. Allosterically activated by GTP. Its function is as follows. Catalyzes the conversion of uracil and 5-phospho-alpha-D-ribose 1-diphosphate (PRPP) to UMP and diphosphate. The polypeptide is Uracil phosphoribosyltransferase (Mesoplasma florum (strain ATCC 33453 / NBRC 100688 / NCTC 11704 / L1) (Acholeplasma florum)).